The sequence spans 132 residues: uncharacterized protein (132 aa).

Transmembrane regions (helical) follow at residues 15 to 37 (FPEY…LLLY), 49 to 71 (AFIP…LRLF), 81 to 103 (VILT…LALV), and 110 to 129 (LAAT…MAFV).

It is found in the cell membrane. This is an uncharacterized protein from Archaeoglobus fulgidus (strain ATCC 49558 / DSM 4304 / JCM 9628 / NBRC 100126 / VC-16).